The primary structure comprises 205 residues: GTP cyclohydrolase-2 (205 aa).

Residue 49–53 participates in GTP binding; sequence RIHSE. Residues Cys-54, Cys-65, and Cys-67 each contribute to the Zn(2+) site. GTP is bound by residues Gln-70, 92-94, and Thr-114; that span reads EGR. Catalysis depends on Asp-126, which acts as the Proton acceptor. The Nucleophile role is filled by Arg-128. 2 residues coordinate GTP: Thr-149 and Lys-154.

This sequence belongs to the GTP cyclohydrolase II family. Zn(2+) is required as a cofactor.

The catalysed reaction is GTP + 4 H2O = 2,5-diamino-6-hydroxy-4-(5-phosphoribosylamino)-pyrimidine + formate + 2 phosphate + 3 H(+). It functions in the pathway cofactor biosynthesis; riboflavin biosynthesis; 5-amino-6-(D-ribitylamino)uracil from GTP: step 1/4. In terms of biological role, catalyzes the conversion of GTP to 2,5-diamino-6-ribosylamino-4(3H)-pyrimidinone 5'-phosphate (DARP), formate and pyrophosphate. The sequence is that of GTP cyclohydrolase-2 from Shewanella loihica (strain ATCC BAA-1088 / PV-4).